A 351-amino-acid polypeptide reads, in one-letter code: Methylthioribose-1-phosphate isomerase (351 aa).

Substrate is bound by residues 55 to 57 (RGA), Arg-95, and Gln-202. Asp-243 acts as the Proton donor in catalysis. 253–254 (NK) is a substrate binding site.

It belongs to the eIF-2B alpha/beta/delta subunits family. MtnA subfamily.

The enzyme catalyses 5-(methylsulfanyl)-alpha-D-ribose 1-phosphate = 5-(methylsulfanyl)-D-ribulose 1-phosphate. Its pathway is amino-acid biosynthesis; L-methionine biosynthesis via salvage pathway; L-methionine from S-methyl-5-thio-alpha-D-ribose 1-phosphate: step 1/6. In terms of biological role, catalyzes the interconversion of methylthioribose-1-phosphate (MTR-1-P) into methylthioribulose-1-phosphate (MTRu-1-P). The polypeptide is Methylthioribose-1-phosphate isomerase (Marinobacter nauticus (strain ATCC 700491 / DSM 11845 / VT8) (Marinobacter aquaeolei)).